A 31-amino-acid polypeptide reads, in one-letter code: Cytochrome b6-f complex subunit 6 (31 aa).

Residues 4 to 24 (ITSYFGFLLAALTITSALLIG) traverse the membrane as a helical segment.

The protein belongs to the PetL family. The 4 large subunits of the cytochrome b6-f complex are cytochrome b6, subunit IV (17 kDa polypeptide, PetD), cytochrome f and the Rieske protein, while the 4 small subunits are PetG, PetL, PetM and PetN. The complex functions as a dimer.

The protein resides in the plastid. It is found in the chloroplast thylakoid membrane. In terms of biological role, component of the cytochrome b6-f complex, which mediates electron transfer between photosystem II (PSII) and photosystem I (PSI), cyclic electron flow around PSI, and state transitions. PetL is important for photoautotrophic growth as well as for electron transfer efficiency and stability of the cytochrome b6-f complex. In Magnolia grandiflora (Southern magnolia), this protein is Cytochrome b6-f complex subunit 6.